The following is a 71-amino-acid chain: DNA-directed RNA polymerase subunit 10-like protein (71 aa).

Residues C7, C10, C44, and C45 each coordinate Zn(2+).

The protein belongs to the archaeal Rpo10/eukaryotic RPB10 RNA polymerase subunit family. As to quaternary structure, interacts with IYO.

Its subcellular location is the nucleus. The protein is DNA-directed RNA polymerase subunit 10-like protein of Arabidopsis thaliana (Mouse-ear cress).